A 265-amino-acid chain; its full sequence is MDKASLGIGIFDSGVGGVTVLKELINLLPGENFYYLGDTAHVPYGSKSKEELLILGDAIIRFFLKLGVKMVVFACNTSSAITLPILKERYPVLMEGMLEPLRKNMPAKAKVGVLATEATVKSGLYQKKLMETNKFQEVYMIACPQYVPLIEKGIVSGKEVEEATREYFEPLLKEEVRDVVLGCTHYPFLTETIQKLYPKIQVIDPAAYVAREVYRKLKENKLLGENGGKVQFYVTGDEKSLKNLGSLYLGYNIDRVQKIDLEVIV.

Residues 12–13 (DS) and 44–45 (YG) contribute to the substrate site. The active-site Proton donor/acceptor is the Cys-75. 76-77 (NT) contacts substrate. Cys-183 serves as the catalytic Proton donor/acceptor. Position 184–185 (184–185 (TH)) interacts with substrate.

This sequence belongs to the aspartate/glutamate racemases family.

The enzyme catalyses L-glutamate = D-glutamate. It functions in the pathway cell wall biogenesis; peptidoglycan biosynthesis. Its function is as follows. Provides the (R)-glutamate required for cell wall biosynthesis. The polypeptide is Glutamate racemase (Carboxydothermus hydrogenoformans (strain ATCC BAA-161 / DSM 6008 / Z-2901)).